A 418-amino-acid polypeptide reads, in one-letter code: Glutamyl-tRNA reductase (418 aa).

Substrate contacts are provided by residues 49-52 (TCNR), S109, 114-116 (EPQ), and Q120. C50 acts as the Nucleophile in catalysis. Residue 189–194 (GAGETI) coordinates NADP(+).

It belongs to the glutamyl-tRNA reductase family. Homodimer.

The enzyme catalyses (S)-4-amino-5-oxopentanoate + tRNA(Glu) + NADP(+) = L-glutamyl-tRNA(Glu) + NADPH + H(+). It functions in the pathway porphyrin-containing compound metabolism; protoporphyrin-IX biosynthesis; 5-aminolevulinate from L-glutamyl-tRNA(Glu): step 1/2. Its function is as follows. Catalyzes the NADPH-dependent reduction of glutamyl-tRNA(Glu) to glutamate 1-semialdehyde (GSA). The sequence is that of Glutamyl-tRNA reductase from Escherichia coli O139:H28 (strain E24377A / ETEC).